The following is a 327-amino-acid chain: Serine/threonine-protein phosphatase 4 regulatory subunit ppfr-4 (327 aa).

Positions 141–185 (KLAVEEIRRLKLERHKKKQELKMAELRIQKQLEAVSIDEQNLREL) form a coiled coil. The tract at residues 271 to 327 (KFGHNPQNAPQSSAPAGAEAQESEEEVDDDEARAKAMRWDEYKDDHRRGWGNMHNKG) is disordered. A compositionally biased stretch (polar residues) spans 275-284 (NPQNAPQSSA). Acidic residues predominate over residues 291 to 301 (QESEEEVDDDE). Positions 302–318 (ARAKAMRWDEYKDDHRR) are enriched in basic and acidic residues.

In terms of assembly, serine/threonine-protein phosphatase 4 (PP4) occurs in different assemblies of the catalytic and one or more regulatory subunits. The catalytic subunit is likely to be pph-4.1.

In terms of biological role, probable regulatory subunit of serine/threonine-protein phosphatase PP4 which may play a role in meiosis and embryonic mitosis. Probably in association with catalytic subunit pph-4.1, regulates microtubule severing during oocyte meiosis II by dephosphorylating and likely activating mei-1, a component of the katanin microtubule severing complex. The polypeptide is Serine/threonine-protein phosphatase 4 regulatory subunit ppfr-4 (Caenorhabditis elegans).